Consider the following 215-residue polypeptide: TLD domain-containing protein 2 (215 aa).

Residues M1–V46 are disordered. Acidic residues predominate over residues L19–A34. The TLDc domain maps to Q54–S215.

The protein belongs to the OXR1 family.

The sequence is that of TLD domain-containing protein 2 (TLDC2) from Homo sapiens (Human).